Reading from the N-terminus, the 100-residue chain is MKVTDVRLRKIQTDGRMKALVSITLDEAFVIHDLRVIEGNSGLFVAMPSKRTPDGEFRDIAHPINSDMRQEIQDAVMKVYDETDEVIPDKNASSEDSDEA.

The protein belongs to the SpoVG family.

Functionally, could be involved in septation. The chain is Putative septation protein SpoVG from Staphylococcus haemolyticus (strain JCSC1435).